The sequence spans 63 residues: Large ribosomal subunit protein bL28 (63 aa).

The protein belongs to the bacterial ribosomal protein bL28 family.

This chain is Large ribosomal subunit protein bL28, found in Geotalea daltonii (strain DSM 22248 / JCM 15807 / FRC-32) (Geobacter daltonii).